Here is a 157-residue protein sequence, read N- to C-terminus: Urease accessory protein UreE (157 aa).

It belongs to the UreE family.

The protein localises to the cytoplasm. Involved in urease metallocenter assembly. Binds nickel. Probably functions as a nickel donor during metallocenter assembly. This chain is Urease accessory protein UreE, found in Corynebacterium glutamicum (strain ATCC 13032 / DSM 20300 / JCM 1318 / BCRC 11384 / CCUG 27702 / LMG 3730 / NBRC 12168 / NCIMB 10025 / NRRL B-2784 / 534).